Here is a 100-residue protein sequence, read N- to C-terminus: UPF0125 protein CV_3462 (100 aa).

The protein belongs to the UPF0125 (RnfH) family.

In Chromobacterium violaceum (strain ATCC 12472 / DSM 30191 / JCM 1249 / CCUG 213 / NBRC 12614 / NCIMB 9131 / NCTC 9757 / MK), this protein is UPF0125 protein CV_3462.